We begin with the raw amino-acid sequence, 168 residues long: Lipoprotein signal peptidase (168 aa).

4 consecutive transmembrane segments (helical) span residues 5–25, 37–57, 59–79, and 85–105; these read SPYALLVVAAIALDQWIKHLV, LVPFLALFRTYNTGIAFSMFS, FGDTGLVVIAVLVVAFVLYLA, and GHVIARTGFALIIGGALGNLI. Active-site residues include Asp115 and Asp133. A helical membrane pass occupies residues 125-145; the sequence is SFAIFNLADAFISVGAALVVF.

Belongs to the peptidase A8 family.

Its subcellular location is the cell inner membrane. The catalysed reaction is Release of signal peptides from bacterial membrane prolipoproteins. Hydrolyzes -Xaa-Yaa-Zaa-|-(S,diacylglyceryl)Cys-, in which Xaa is hydrophobic (preferably Leu), and Yaa (Ala or Ser) and Zaa (Gly or Ala) have small, neutral side chains.. It participates in protein modification; lipoprotein biosynthesis (signal peptide cleavage). Its function is as follows. This protein specifically catalyzes the removal of signal peptides from prolipoproteins. The chain is Lipoprotein signal peptidase from Mesorhizobium japonicum (strain LMG 29417 / CECT 9101 / MAFF 303099) (Mesorhizobium loti (strain MAFF 303099)).